Consider the following 691-residue polypeptide: Lacticin-481/lactococcin-DR transport/processing ATP-binding protein lcnDR3 (691 aa).

The Peptidase C39 domain maps to 6 to 130 (QNNEQDCLLA…KKFSGYIITL (125 aa)). Residue Cys-12 is part of the active site. Positions 158–434 (TFLYIFSLFI…IQDVMFEISR (277 aa)) constitute an ABC transmembrane type-1 domain. The next 5 helical transmembrane spans lie at 159 to 179 (FLYI…SIIL), 189 to 209 (ITYS…SLLM), 262 to 284 (GILL…IIYL), 289 to 311 (FTLT…SLIS), and 385 to 405 (ICVI…LVSI). Residues 464-689 (IILKDISYSY…LLNDSYNSFV (226 aa)) enclose the ABC transporter domain. 497 to 504 (GKSGSGKS) contacts ATP.

It belongs to the ABC transporter superfamily.

The protein localises to the cell membrane. Probably implicated in the export process of the lantibiotic lacticin-481/lactococcin-DR. The sequence is that of Lacticin-481/lactococcin-DR transport/processing ATP-binding protein lcnDR3 (lcnDR3) from Lactococcus lactis subsp. lactis (Streptococcus lactis).